A 315-amino-acid chain; its full sequence is Cytochrome c biogenesis protein CcsA (315 aa).

7 consecutive transmembrane segments (helical) span residues 14–34 (VVSL…ISFW), 72–92 (ISNL…AQLF), 101–121 (IVSA…SFVL), 146–166 (VIMC…GVFL), 221–241 (SITA…VWAN), 255–272 (TWAL…HTRL), and 282–302 (AILA…VNLL).

It belongs to the CcmF/CycK/Ccl1/NrfE/CcsA family. As to quaternary structure, may interact with ccs1.

It localises to the cellular thylakoid membrane. In terms of biological role, required during biogenesis of c-type cytochromes (cytochrome c6 and cytochrome f) at the step of heme attachment. In Prochlorococcus marinus (strain NATL1A), this protein is Cytochrome c biogenesis protein CcsA.